The sequence spans 56 residues: Large ribosomal subunit protein bL32 (56 aa).

Residues 1 to 34 (MAVQQNKKSRSKRGMRRSHDSLSTAQLSVDATSG) are disordered. The segment covering 7–16 (KKSRSKRGMR) has biased composition (basic residues). Over residues 21-31 (SLSTAQLSVDA) the composition is skewed to polar residues.

This sequence belongs to the bacterial ribosomal protein bL32 family.

The polypeptide is Large ribosomal subunit protein bL32 (Shewanella frigidimarina (strain NCIMB 400)).